Consider the following 185-residue polypeptide: Protein C2-DOMAIN ABA-RELATED 9 (185 aa).

The C2 domain maps to 1–104 (MEDKPLGILR…LEAHQMELDF (104 aa)). Ca(2+) contacts are provided by Arg-22, Asp-23, Asp-28, Asp-74, Lys-75, Asp-76, and Asp-82.

It belongs to the plant CAR protein family. In terms of assembly, binds to PYR/PYL/RCAR abscisic acid intracellular receptors in an ABA-independent manner, both at the plasma membrane and in the nucleus. Interacts with LOT1 in the nuleus; this interaction is repressed by abscisic acid (ABA) and is sensitive to calcium ion Ca(2+), leading to free CAR9 accumulation at the plasma membrane. Requires Ca(2+) as cofactor.

The protein resides in the cell membrane. It is found in the nucleus. Functionally, stimulates the GTPase/ATPase activities of Obg-like ATPases. Mediates the transient calcium-dependent interaction of PYR/PYL/RCAR abscisic acid (ABA) receptors with the plasma membrane and thus regulates ABA sensitivity. The sequence is that of Protein C2-DOMAIN ABA-RELATED 9 from Arabidopsis thaliana (Mouse-ear cress).